Consider the following 441-residue polypeptide: Phosphoglucosamine mutase (441 aa).

Serine 100 acts as the Phosphoserine intermediate in catalysis. 4 residues coordinate Mg(2+): serine 100, aspartate 239, aspartate 241, and aspartate 243. Phosphoserine is present on serine 100.

It belongs to the phosphohexose mutase family. Requires Mg(2+) as cofactor. Activated by phosphorylation.

It carries out the reaction alpha-D-glucosamine 1-phosphate = D-glucosamine 6-phosphate. Catalyzes the conversion of glucosamine-6-phosphate to glucosamine-1-phosphate. The polypeptide is Phosphoglucosamine mutase (Ruthia magnifica subsp. Calyptogena magnifica).